The sequence spans 303 residues: Signal recognition particle receptor FtsY (303 aa).

GTP contacts are provided by residues 108–115, 190–194, and 254–257; these read GVNGAGKT, DTAGR, and TKLD.

Belongs to the GTP-binding SRP family. FtsY subfamily. As to quaternary structure, part of the signal recognition particle protein translocation system, which is composed of SRP and FtsY. SRP is a ribonucleoprotein composed of Ffh and a 4.5S RNA molecule.

It is found in the cell inner membrane. It localises to the cytoplasm. The catalysed reaction is GTP + H2O = GDP + phosphate + H(+). Involved in targeting and insertion of nascent membrane proteins into the cytoplasmic membrane. Acts as a receptor for the complex formed by the signal recognition particle (SRP) and the ribosome-nascent chain (RNC). Interaction with SRP-RNC leads to the transfer of the RNC complex to the Sec translocase for insertion into the membrane, the hydrolysis of GTP by both Ffh and FtsY, and the dissociation of the SRP-FtsY complex into the individual components. This is Signal recognition particle receptor FtsY from Rickettsia felis (strain ATCC VR-1525 / URRWXCal2) (Rickettsia azadi).